A 300-amino-acid chain; its full sequence is Tyrosine recombinase XerC (300 aa).

In terms of domain architecture, Core-binding (CB) spans 1–86 (MESVLDAFDQ…AVKTFTAWAV (86 aa)). The Tyr recombinase domain maps to 107–294 (TLPAVLRQDQ…TVARLRAVHD (188 aa)). Catalysis depends on residues Arg151, Lys175, His246, Arg249, and His272. The active-site O-(3'-phospho-DNA)-tyrosine intermediate is Tyr281.

This sequence belongs to the 'phage' integrase family. XerC subfamily. In terms of assembly, forms a cyclic heterotetrameric complex composed of two molecules of XerC and two molecules of XerD.

It is found in the cytoplasm. Its function is as follows. Site-specific tyrosine recombinase, which acts by catalyzing the cutting and rejoining of the recombining DNA molecules. The XerC-XerD complex is essential to convert dimers of the bacterial chromosome into monomers to permit their segregation at cell division. It also contributes to the segregational stability of plasmids. The protein is Tyrosine recombinase XerC of Mycobacterium sp. (strain KMS).